The chain runs to 266 residues: Tryptophan synthase alpha chain (266 aa).

Active-site proton acceptor residues include E49 and D60.

It belongs to the TrpA family. As to quaternary structure, tetramer of two alpha and two beta chains.

The enzyme catalyses (1S,2R)-1-C-(indol-3-yl)glycerol 3-phosphate + L-serine = D-glyceraldehyde 3-phosphate + L-tryptophan + H2O. The protein operates within amino-acid biosynthesis; L-tryptophan biosynthesis; L-tryptophan from chorismate: step 5/5. In terms of biological role, the alpha subunit is responsible for the aldol cleavage of indoleglycerol phosphate to indole and glyceraldehyde 3-phosphate. The polypeptide is Tryptophan synthase alpha chain (Trichormus variabilis (strain ATCC 29413 / PCC 7937) (Anabaena variabilis)).